Reading from the N-terminus, the 311-residue chain is Putative RNA-binding protein R05D3.8 (311 aa).

The 81-residue stretch at 155 to 235 (KRLFVSYFPL…RRAVLKESVK (81 aa)) folds into the RRM domain. Positions 261–270 (TPSRPVTSVH) are enriched in polar residues. The segment at 261-311 (TPSRPVTSVHASSSASSNHYDPSAAAGYAPLYHQPPESDPLSQCGYGPRKW) is disordered.

The polypeptide is Putative RNA-binding protein R05D3.8 (Caenorhabditis elegans).